The primary structure comprises 271 residues: Co-chaperone protein DjlA (271 aa).

The Periplasmic portion of the chain corresponds to 1-6 (MQYWGK). Residues 7 to 31 (IIGVAVALLMGGGFWGVVLGLLIGH) form a helical membrane-spanning segment. Residues 32–271 (MFDKARSRKM…ELIKQQKGFK (240 aa)) are Cytoplasmic-facing. The region spanning 205–271 (DACNVLGVKP…ELIKQQKGFK (67 aa)) is the J domain.

As to quaternary structure, homodimer.

It is found in the cell inner membrane. In terms of biological role, regulatory DnaK co-chaperone. Direct interaction between DnaK and DjlA is needed for the induction of the wcaABCDE operon, involved in the synthesis of a colanic acid polysaccharide capsule, possibly through activation of the RcsB/RcsC phosphotransfer signaling pathway. The colanic acid capsule may help the bacterium survive conditions outside the host. This Escherichia coli (strain K12) protein is Co-chaperone protein DjlA.